The following is a 656-amino-acid chain: Chaperone protein DnaK (656 aa).

A Phosphothreonine; by autocatalysis modification is found at T204. Residues 602-656 (KLAERVYAKKGGAAGAPPGGEAEGEPQAQAGGKKEDVVDAEFEEVKDEKKKDEDK) form a disordered region. Residues 620-632 (GGEAEGEPQAQAG) show a composition bias toward low complexity. Basic and acidic residues predominate over residues 647 to 656 (KDEKKKDEDK).

Belongs to the heat shock protein 70 family.

Functionally, acts as a chaperone. This Coxiella burnetii (strain CbuG_Q212) (Coxiella burnetii (strain Q212)) protein is Chaperone protein DnaK.